A 404-amino-acid polypeptide reads, in one-letter code: Putative replication protein C (404 aa).

Residues proline 249–arginine 287 are disordered.

To A.rhizogenes possible replication protein C (RepC).

In Sinorhizobium fredii (strain NBRC 101917 / NGR234), this protein is Putative replication protein C.